The following is a 149-amino-acid chain: 3-dehydroquinate dehydratase (149 aa).

Tyr-26 (proton acceptor) is an active-site residue. 3 residues coordinate substrate: Asn-77, His-83, and Asp-90. The Proton donor role is filled by His-103. Residues 104–105 (LS) and Arg-114 contribute to the substrate site.

This sequence belongs to the type-II 3-dehydroquinase family. Homododecamer.

The enzyme catalyses 3-dehydroquinate = 3-dehydroshikimate + H2O. Its pathway is metabolic intermediate biosynthesis; chorismate biosynthesis; chorismate from D-erythrose 4-phosphate and phosphoenolpyruvate: step 3/7. Functionally, catalyzes a trans-dehydration via an enolate intermediate. In Edwardsiella ictaluri (strain 93-146), this protein is 3-dehydroquinate dehydratase.